The chain runs to 260 residues: Nuclear receptor subfamily 0 group B member 2 (260 aa).

The NR LBD domain occupies 16–260 (SHPTILYTLL…ELLEDMLLLR (245 aa)). Arg57 bears the Symmetric dimethylarginine; by PRMT5 mark.

This sequence belongs to the nuclear hormone receptor family. NR0 subfamily. In terms of assembly, heterodimer; efficient DNA binding requires dimerization with another bHLH protein. Interacts (via N-terminus) with NEUROD1 (via N-terminus and C-terminus). Interacts with ID2. Interacts with NR1I3 and EID1. Interacts with RARA, RXRA, THRB, NR5A1, NR5A2, PPARA and PPARG. Interacts with RORG, NFIL3, NR1D1 and BHLHE41. Interacts with HNF4A; the resulting heterodimer is transcriptionally inactive. Interacts with DDX3X; this interaction disrupts the interaction between HNF4 and NR0B2/SHP that forms inactive heterodimers and enhances the formation of active HNF4 homodimers. Arginine methylation by PRMT5 enhances repression activity of metabolic genes in liver in response to bile acid signaling, by increasing interaction with cofactors. Detected in kidney, testis, heart and liver.

It localises to the cytoplasm. Its subcellular location is the nucleus. Functionally, transcriptional regulator that acts as a negative regulator of receptor-dependent signaling pathways. Specifically inhibits transactivation of the nuclear receptor with which it interacts. Inhibits transcriptional activity of NEUROD1 on E-box-containing promoter by interfering with the coactivation function of the p300/CBP-mediated transcription complex for NEUROD1. Essential component of the liver circadian clock which via its interaction with NR1D1 and RORG regulates NPAS2-mediated hepatic lipid metabolism. Regulates the circadian expression of cytochrome P450 (CYP) enzymes. Represses: NR5A2 and HNF4A to down-regulate CYP2C38, NFLI3 to up-regulate CYP2A5, BHLHE41/HNF1A axis to up-regulate CYP1A2, CYP2E1 and CYP3A11, and NR1D1 to up-regulate CYP2B10, CYP4A10 and CYP4A14. The polypeptide is Nuclear receptor subfamily 0 group B member 2 (Nr0b2) (Rattus norvegicus (Rat)).